Consider the following 252-residue polypeptide: 5-oxoprolinase subunit A (252 aa).

It belongs to the LamB/PxpA family. In terms of assembly, forms a complex composed of PxpA, PxpB and PxpC.

It carries out the reaction 5-oxo-L-proline + ATP + 2 H2O = L-glutamate + ADP + phosphate + H(+). Functionally, catalyzes the cleavage of 5-oxoproline to form L-glutamate coupled to the hydrolysis of ATP to ADP and inorganic phosphate. In Mycobacterium ulcerans (strain Agy99), this protein is 5-oxoprolinase subunit A.